The primary structure comprises 249 residues: Isoamyl acetate-hydrolyzing esterase 1 homolog (249 aa).

The active-site Nucleophile is the Ser-24. N6-succinyllysine is present on Lys-63. Asp-197 serves as the catalytic Proton donor. His-200 functions as the Proton acceptor in the catalytic mechanism.

It belongs to the 'GDSL' lipolytic enzyme family. IAH1 subfamily.

In terms of biological role, probable lipase. This chain is Isoamyl acetate-hydrolyzing esterase 1 homolog (Iah1), found in Rattus norvegicus (Rat).